Reading from the N-terminus, the 432-residue chain is MQVSVETTQGLGRRVTITIAADSIETAVKSELVNVAKKVRIDGFRKGKVPMNIVAQRYGASVRQDVLGDLMSRNFVDAIIKEKINPAGAPNYVPGEYKVGEDFTYSVEFEVYPEVELTGLESIEVEKPVVEVTDADVDVMLDTLRKQQATWKEKDGAADAEDRVTIDFTGSVDGEEFEGGKATDFVLAMGQGRMIPGFEDGVKGHKAGEEFTIDVTFPEEYHAENLKGKAAKFVINLKKVEERELPELTEEFIKRFGVEDGSVAGLRAEVRKNMERELKGAVRNRVKSQAIEGLVKANDIDVPSALIDSEIDVLRRQAAQRFGGNEKQALELPRELFEEQAKRRVVVGLLLGEVIRTNELKADEERVKGLIEEMASAYEDPKEVIEFYSKNKELMDNMRNVALEEQAVEAVLAKAKVSEKATSFNELMNQQA.

Residues 161-246 (EDRVTIDFTG…LKKVEERELP (86 aa)) form the PPIase FKBP-type domain.

The protein belongs to the FKBP-type PPIase family. Tig subfamily.

It localises to the cytoplasm. It carries out the reaction [protein]-peptidylproline (omega=180) = [protein]-peptidylproline (omega=0). Functionally, involved in protein export. Acts as a chaperone by maintaining the newly synthesized protein in an open conformation. Functions as a peptidyl-prolyl cis-trans isomerase. This is Trigger factor from Salmonella typhi.